A 205-amino-acid polypeptide reads, in one-letter code: SREBP regulating gene protein (205 aa).

The Cytoplasmic portion of the chain corresponds to 1–16 (MVNLAAMVWRRLLRKR). A helical transmembrane segment spans residues 17–35 (WVLALVFGLSLVYFLSSTF). Topologically, residues 36 to 205 (KQEERAVRDR…GESPPELFPA (170 aa)) are lumenal. Asparagine 67 is a glycosylation site (N-linked (GlcNAc...) asparagine).

The protein belongs to the SPRING family. As to quaternary structure, interacts with SCAP.

The protein resides in the golgi apparatus membrane. Positively regulates hepatic SREBP signaling pathway by modulating the proper localization of SCAP (SREBP cleavage-activating protein) to the endoplasmic reticulum, thereby controlling the level of functional SCAP. The protein is SREBP regulating gene protein of Homo sapiens (Human).